The primary structure comprises 353 residues: MTDEPLGSHVLELQVAEVVEETSDARSLVFTVPEGAEIAADRLRYSPGQFLTLRVPSDRTGSVARCYSLSSSPTTDDRLTVTVKRTADGYASNWLCDNAHAGMRIHVLAPSGTFVPKDLDTDFLLLAAGSGITPMMAICKSALAEGTGNVVLIYANRDENSVIFAGALRELAAKYPDRLTVVHWLETVQGLPTAAGLGALAKPFAGREAFICGPGPFMTAAEDALRAAGTPDDHIHIEVFKSLESDPFAAVVIPEDDGDDQGPATAVVTLDGTTHEIRWPRSAKLLDVLLDKGLDAPFSCREGHCGACAVLKKSGEVHMEINDVLEPSDLEEGLILGCQATPVSDSVEVTYDE.

Residues 8-117 (SHVLELQVAE…LAPSGTFVPK (110 aa)) form the FAD-binding FR-type domain. The 2Fe-2S ferredoxin-type domain maps to 264 to 353 (ATAVVTLDGT…SDSVEVTYDE (90 aa)). Cys-300, Cys-305, Cys-308, and Cys-338 together coordinate [2Fe-2S] cluster.

As to quaternary structure, monomer. The two-component system 3-ketosteroid-9-alpha-monooxygenase is composed of an oxygenase component KshA and a reductase component KshB. Requires FAD as cofactor. [2Fe-2S] cluster serves as cofactor.

It catalyses the reaction androsta-1,4-diene-3,17-dione + 2 reduced [2Fe-2S]-[ferredoxin] + O2 + 2 H(+) = 9alpha-hydroxyandrosta-1,4-diene-3,17-dione + 2 oxidized [2Fe-2S]-[ferredoxin] + H2O. It participates in lipid metabolism; steroid biosynthesis. In terms of biological role, involved in the degradation of cholesterol. Catalyzes the introduction of a 9a-hydroxyl moiety into 1,4-androstadiene-3,17-dione (ADD) to yield the 9alpha-hydroxy-1,4-androstadiene-3,17-dione (9OHADD) intermediate which spontaneously form 3-hydroxy-9,10-seconandrost-1,3,5(10)-triene-9,17-dione (HSA) via the meta-cleavage of ring B with concomitant aromatization of ring A. This is 3-ketosteroid-9-alpha-monooxygenase, ferredoxin reductase component (kshB) from Mycolicibacterium smegmatis (strain ATCC 700084 / mc(2)155) (Mycobacterium smegmatis).